Reading from the N-terminus, the 395-residue chain is Elongation factor Tu (395 aa).

In terms of domain architecture, tr-type G spans 10 to 204; it reads KPHVNIGTIG…AIDNWIPLPQ (195 aa). The interval 19-26 is G1; it reads GHVDHGKT. 19 to 26 is a GTP binding site; the sequence is GHVDHGKT. A Mg(2+)-binding site is contributed by T26. Positions 60–64 are G2; the sequence is GITIN. The G3 stretch occupies residues 81-84; it reads DCPG. GTP contacts are provided by residues 81–85 and 136–139; these read DCPGH and NKVD. The tract at residues 136–139 is G4; that stretch reads NKVD. A G5 region spans residues 174 to 176; the sequence is SAL.

Belongs to the TRAFAC class translation factor GTPase superfamily. Classic translation factor GTPase family. EF-Tu/EF-1A subfamily. In terms of assembly, monomer.

Its subcellular location is the cytoplasm. It catalyses the reaction GTP + H2O = GDP + phosphate + H(+). Its function is as follows. GTP hydrolase that promotes the GTP-dependent binding of aminoacyl-tRNA to the A-site of ribosomes during protein biosynthesis. This chain is Elongation factor Tu, found in Azobacteroides pseudotrichonymphae genomovar. CFP2.